The following is a 293-amino-acid chain: Bifunctional protein FolD (293 aa).

Residues 169–171 (GRG), Thr-196, and Val-237 each bind NADP(+).

It belongs to the tetrahydrofolate dehydrogenase/cyclohydrolase family. In terms of assembly, homodimer.

It carries out the reaction (6R)-5,10-methylene-5,6,7,8-tetrahydrofolate + NADP(+) = (6R)-5,10-methenyltetrahydrofolate + NADPH. The enzyme catalyses (6R)-5,10-methenyltetrahydrofolate + H2O = (6R)-10-formyltetrahydrofolate + H(+). It participates in one-carbon metabolism; tetrahydrofolate interconversion. Catalyzes the oxidation of 5,10-methylenetetrahydrofolate to 5,10-methenyltetrahydrofolate and then the hydrolysis of 5,10-methenyltetrahydrofolate to 10-formyltetrahydrofolate. The chain is Bifunctional protein FolD from Leifsonia xyli subsp. xyli (strain CTCB07).